A 397-amino-acid chain; its full sequence is Tryptophan synthase beta chain (397 aa).

An N6-(pyridoxal phosphate)lysine modification is found at lysine 91.

It belongs to the TrpB family. As to quaternary structure, tetramer of two alpha and two beta chains. Pyridoxal 5'-phosphate is required as a cofactor.

The catalysed reaction is (1S,2R)-1-C-(indol-3-yl)glycerol 3-phosphate + L-serine = D-glyceraldehyde 3-phosphate + L-tryptophan + H2O. It functions in the pathway amino-acid biosynthesis; L-tryptophan biosynthesis; L-tryptophan from chorismate: step 5/5. The beta subunit is responsible for the synthesis of L-tryptophan from indole and L-serine. This is Tryptophan synthase beta chain from Bacillus cereus (strain ATCC 14579 / DSM 31 / CCUG 7414 / JCM 2152 / NBRC 15305 / NCIMB 9373 / NCTC 2599 / NRRL B-3711).